The sequence spans 405 residues: Tryptophan synthase beta chain (405 aa).

At K98 the chain carries N6-(pyridoxal phosphate)lysine.

The protein belongs to the TrpB family. As to quaternary structure, tetramer of two alpha and two beta chains. Pyridoxal 5'-phosphate serves as cofactor.

The catalysed reaction is (1S,2R)-1-C-(indol-3-yl)glycerol 3-phosphate + L-serine = D-glyceraldehyde 3-phosphate + L-tryptophan + H2O. It functions in the pathway amino-acid biosynthesis; L-tryptophan biosynthesis; L-tryptophan from chorismate: step 5/5. Its function is as follows. The beta subunit is responsible for the synthesis of L-tryptophan from indole and L-serine. The chain is Tryptophan synthase beta chain from Xylella fastidiosa (strain M12).